Consider the following 122-residue polypeptide: Small ribosomal subunit protein uS13 (122 aa).

The disordered stretch occupies residues 99–122 (RGQRTHTNARTRKGPAKAIAGKKK).

The protein belongs to the universal ribosomal protein uS13 family. In terms of assembly, part of the 30S ribosomal subunit. Forms a loose heterodimer with protein S19. Forms two bridges to the 50S subunit in the 70S ribosome.

Functionally, located at the top of the head of the 30S subunit, it contacts several helices of the 16S rRNA. In the 70S ribosome it contacts the 23S rRNA (bridge B1a) and protein L5 of the 50S subunit (bridge B1b), connecting the 2 subunits; these bridges are implicated in subunit movement. Contacts the tRNAs in the A and P-sites. The chain is Small ribosomal subunit protein uS13 from Rhodopseudomonas palustris (strain TIE-1).